A 282-amino-acid chain; its full sequence is D-alanine aminotransferase (282 aa).

Residue Y32 participates in substrate binding. R51 serves as a coordination point for pyridoxal 5'-phosphate. Residues R99 and H101 each contribute to the substrate site. The active-site Proton acceptor is K146. K146 carries the post-translational modification N6-(pyridoxal phosphate)lysine. E178 is a binding site for pyridoxal 5'-phosphate.

Belongs to the class-IV pyridoxal-phosphate-dependent aminotransferase family. As to quaternary structure, homodimer. The cofactor is pyridoxal 5'-phosphate.

The catalysed reaction is D-alanine + 2-oxoglutarate = D-glutamate + pyruvate. Acts on the D-isomers of alanine, leucine, aspartate, glutamate, aminobutyrate, norvaline and asparagine. The enzyme transfers an amino group from a substrate D-amino acid to the pyridoxal phosphate cofactor to form pyridoxamine and an alpha-keto acid in the first half-reaction. The second half-reaction is the reverse of the first, transferring the amino group from the pyridoxamine to a second alpha-keto acid to form the product D-amino acid via a ping-pong mechanism. This is an important process in the formation of D-alanine and D-glutamate, which are essential bacterial cell wall components. The chain is D-alanine aminotransferase (dat) from Staphylococcus aureus (strain COL).